We begin with the raw amino-acid sequence, 935 residues long: Disintegrin and metalloproteinase domain-containing protein 22 (935 aa).

The signal sequence occupies residues 1-24 (MHINGGPLASWICCVIGSIHLAHA). A propeptide spanning residues 25–227 (STRPENGGTS…QQTRSQRKKR (203 aa)) is cleaved from the precursor. N-linked (GlcNAc...) asparagine glycosylation is found at asparagine 167 and asparagine 210. Over 228–736 (QTRRYPRNVE…NRDEGVISTN (509 aa)) the chain is Extracellular. Residues 241 to 440 (KYVELMIVND…GGGACLFNKP (200 aa)) enclose the Peptidase M12B domain. Cystine bridges form between cysteine 351-cysteine 435, cysteine 394-cysteine 419, cysteine 396-cysteine 403, cysteine 449-cysteine 479, cysteine 460-cysteine 476, cysteine 462-cysteine 468, cysteine 475-cysteine 496, cysteine 487-cysteine 493, cysteine 492-cysteine 518, cysteine 505-cysteine 525, cysteine 512-cysteine 544, cysteine 537-cysteine 549, cysteine 556-cysteine 607, cysteine 571-cysteine 637, cysteine 585-cysteine 595, cysteine 602-cysteine 665, and cysteine 659-cysteine 670. Residues 446 to 533 (PPECGNGFVE…QCPANIHKLD (88 aa)) enclose the Disintegrin domain. Residue asparagine 521 is glycosylated (N-linked (GlcNAc...) asparagine). Residues asparagine 609 and asparagine 636 are each glycosylated (N-linked (GlcNAc...) asparagine). An N-linked (GlcNAc...) asparagine glycan is attached at asparagine 677. The EGF-like domain maps to 677–713 (NFSTCLGSTNKICSGHGVCSNEVRCICDRFWTGEDCS). 3 disulfide bridges follow: cysteine 681/cysteine 695, cysteine 689/cysteine 701, and cysteine 703/cysteine 712. A helical transmembrane segment spans residues 737 to 757 (IIIGAIAGTILVLALVLGITA). At 758 to 935 (WGYKNYRRER…QSARLWETSI (178 aa)) the chain is on the cytoplasmic side. The interval 850-935 (VSDVCENGRP…QSARLWETSI (86 aa)) is disordered. The segment covering 859–870 (PRSNSWQGNVTS) has biased composition (polar residues). The span at 871 to 882 (SRKKLRGKRFRP) shows a compositional bias: basic residues. The span at 891–906 (SPAKSPSSSTGSIASS) shows a compositional bias: low complexity.

Post-translationally, the precursor is cleaved by a furin endopeptidase. In terms of tissue distribution, low levels in adult tissues. Not detected in developing embryos.

The protein resides in the cell membrane. Its function is as follows. Probable ligand for integrin in the brain. This is a non catalytic metalloprotease-like protein. This is Disintegrin and metalloproteinase domain-containing protein 22 (adam22) from Xenopus laevis (African clawed frog).